The chain runs to 397 residues: Protein ROH1D (397 aa).

A helical membrane pass occupies residues 247 to 267 (LIVPVYTMTTVLLFVMWALVA).

It belongs to the ROH1 family. As to quaternary structure, interacts with EXO70C2. Mostly expressed in mature pollen.

The protein resides in the membrane. It is found in the cytoplasm. The protein localises to the cytosol. In terms of biological role, involved in the regulation of plant growth, and modulates pollen development to ensure male fertility. May also affect the composition of the inner seed coat mucilage layer. The protein is Protein ROH1D of Arabidopsis thaliana (Mouse-ear cress).